The primary structure comprises 339 residues: Ketol-acid reductoisomerase (NADP(+)) (339 aa).

The region spanning 1–182 (MRVYYDRDAD…GGGRAGIIET (182 aa)) is the KARI N-terminal Rossmann domain. NADP(+)-binding positions include 24–27 (YGSQ), Arg48, Ser51, Thr53, and 83–86 (DELQ). His108 is a catalytic residue. Gly134 is a binding site for NADP(+). The region spanning 183–328 (TFREECETDL…ARLREMMPWI (146 aa)) is the KARI C-terminal knotted domain. Positions 191, 195, 227, and 231 each coordinate Mg(2+). A substrate-binding site is contributed by Ser252.

This sequence belongs to the ketol-acid reductoisomerase family. Mg(2+) is required as a cofactor.

It catalyses the reaction (2R)-2,3-dihydroxy-3-methylbutanoate + NADP(+) = (2S)-2-acetolactate + NADPH + H(+). It carries out the reaction (2R,3R)-2,3-dihydroxy-3-methylpentanoate + NADP(+) = (S)-2-ethyl-2-hydroxy-3-oxobutanoate + NADPH + H(+). It participates in amino-acid biosynthesis; L-isoleucine biosynthesis; L-isoleucine from 2-oxobutanoate: step 2/4. It functions in the pathway amino-acid biosynthesis; L-valine biosynthesis; L-valine from pyruvate: step 2/4. Involved in the biosynthesis of branched-chain amino acids (BCAA). Catalyzes an alkyl-migration followed by a ketol-acid reduction of (S)-2-acetolactate (S2AL) to yield (R)-2,3-dihydroxy-isovalerate. In the isomerase reaction, S2AL is rearranged via a Mg-dependent methyl migration to produce 3-hydroxy-3-methyl-2-ketobutyrate (HMKB). In the reductase reaction, this 2-ketoacid undergoes a metal-dependent reduction by NADPH to yield (R)-2,3-dihydroxy-isovalerate. The chain is Ketol-acid reductoisomerase (NADP(+)) from Parvibaculum lavamentivorans (strain DS-1 / DSM 13023 / NCIMB 13966).